Here is a 1127-residue protein sequence, read N- to C-terminus: Major DNA-binding protein (1127 aa).

Positions 1098–1127 (QVKLTSMDHSGKVVGGKKRKIATMFDDLDL) are required for nuclear localization.

It belongs to the herpesviridae major DNA-binding protein family. Homooligomers. Forms double-helical filaments necessary for the formation of replication compartments within the host nucleus. Interacts with the origin-binding protein. Interacts with the helicase primase complex; this interaction stimulates primer synthesis activity of the helicase-primase complex. Interacts with the DNA polymerase. Interacts with the alkaline exonuclease; this interaction increases its nuclease processivity.

The protein localises to the host nucleus. Plays several crucial roles in viral infection. Participates in the opening of the viral DNA origin to initiate replication by interacting with the origin-binding protein. May disrupt loops, hairpins and other secondary structures present on ssDNA to reduce and eliminate pausing of viral DNA polymerase at specific sites during elongation. Promotes viral DNA recombination by performing strand-transfer, characterized by the ability to transfer a DNA strand from a linear duplex to a complementary single-stranded DNA circle. Can also catalyze the renaturation of complementary single strands. Additionally, reorganizes the host cell nucleus, leading to the formation of prereplicative sites and replication compartments. This process is driven by the protein which can form double-helical filaments in the absence of DNA. This chain is Major DNA-binding protein, found in Alcelaphine herpesvirus 1 (strain C500) (AlHV-1).